Here is a 503-residue protein sequence, read N- to C-terminus: Cytochrome P450 7A1 (503 aa).

A helical membrane pass occupies residues 4 to 24 (ISLIWGIAVVVSCCIWFIIGI). C444 contacts heme.

This sequence belongs to the cytochrome P450 family. Heme is required as a cofactor.

The protein localises to the endoplasmic reticulum membrane. The protein resides in the microsome membrane. The enzyme catalyses cholesterol + reduced [NADPH--hemoprotein reductase] + O2 = 7alpha-hydroxycholesterol + oxidized [NADPH--hemoprotein reductase] + H2O + H(+). It carries out the reaction 4beta-hydroxycholesterol + reduced [NADPH--hemoprotein reductase] + O2 = 4beta,7alpha-dihydroxycholesterol + oxidized [NADPH--hemoprotein reductase] + H2O + H(+). It catalyses the reaction lathosterol + reduced [NADPH--hemoprotein reductase] + O2 = 7alpha,8alpha-epoxy-5alpha-cholestan-3beta-ol + oxidized [NADPH--hemoprotein reductase] + H2O + H(+). The catalysed reaction is lathosterol + reduced [NADPH--hemoprotein reductase] + O2 = 5alpha-cholestan-7-oxo-3beta-ol + oxidized [NADPH--hemoprotein reductase] + H2O + H(+). The enzyme catalyses 7-dehydrocholesterol + reduced [NADPH--hemoprotein reductase] + O2 = 7-oxocholesterol + oxidized [NADPH--hemoprotein reductase] + H2O + H(+). It carries out the reaction (24S)-hydroxycholesterol + reduced [NADPH--hemoprotein reductase] + O2 = (24S)-7alpha-dihydroxycholesterol + oxidized [NADPH--hemoprotein reductase] + H2O + H(+). It catalyses the reaction (24R)-hydroxycholesterol + reduced [NADPH--hemoprotein reductase] + O2 = (24R)-7alpha-dihydroxycholesterol + oxidized [NADPH--hemoprotein reductase] + H2O + H(+). Its pathway is lipid metabolism; bile acid biosynthesis. It participates in steroid metabolism; cholesterol degradation. Its function is as follows. A cytochrome P450 monooxygenase involved in the metabolism of endogenous cholesterol and its oxygenated derivatives (oxysterols). Mechanistically, uses molecular oxygen inserting one oxygen atom into a substrate, and reducing the second into a water molecule, with two electrons provided by NADPH via cytochrome P450 reductase (CPR; NADPH-ferrihemoprotein reductase). Functions as a critical regulatory enzyme of bile acid biosynthesis and cholesterol homeostasis. Catalyzes the hydroxylation of carbon hydrogen bond at 7-alpha position of cholesterol, a rate-limiting step in cholesterol catabolism and bile acid biosynthesis. 7-alpha hydroxylates several oxysterols, including 4beta-hydroxycholesterol and 24-hydroxycholesterol. Catalyzes the oxidation of the 7,8 double bond of 7-dehydrocholesterol and lathosterol with direct and predominant formation of the 7-keto derivatives. This is Cytochrome P450 7A1 from Mus musculus (Mouse).